The chain runs to 307 residues: MSHISVLLFETVESLLADRTTGVYIDATFGRGGHTHLLLSKLDENARVYAFDKDPQALEVAAALAQEDPRFTIIHASFADIKEKMQEIGVQSVDGIMADLGVSSPQLDQAERGFSFMQDGPLDMRMDNSKGLTAAEWLLEVEEEDLANIIYQYGEERHSRRIARAIKQAGKLDTTAQLAEIVKTAHPKWEKHKHPATRTFQAIRIAINKELDDIEVFLPQAVDLLKPKGRLSVISFHSLEDRLIKQFIQKESTLTEDSGWGMPQQQVDTRRLKKISRVRVSEEEVKANPRSRSAWLRVAERLEQKGA.

S-adenosyl-L-methionine is bound by residues 32-34 (GGH), aspartate 52, phenylalanine 78, aspartate 99, and glutamine 106.

This sequence belongs to the methyltransferase superfamily. RsmH family.

The protein localises to the cytoplasm. The catalysed reaction is cytidine(1402) in 16S rRNA + S-adenosyl-L-methionine = N(4)-methylcytidine(1402) in 16S rRNA + S-adenosyl-L-homocysteine + H(+). Specifically methylates the N4 position of cytidine in position 1402 (C1402) of 16S rRNA. This is Ribosomal RNA small subunit methyltransferase H from Acinetobacter baumannii (strain SDF).